Reading from the N-terminus, the 296-residue chain is 4-diphosphocytidyl-2-C-methyl-D-erythritol kinase (296 aa).

Residue K13 is part of the active site. 98 to 108 (PVAAGIGGGSA) contributes to the ATP binding site. D140 is a catalytic residue.

It belongs to the GHMP kinase family. IspE subfamily.

The catalysed reaction is 4-CDP-2-C-methyl-D-erythritol + ATP = 4-CDP-2-C-methyl-D-erythritol 2-phosphate + ADP + H(+). Its pathway is isoprenoid biosynthesis; isopentenyl diphosphate biosynthesis via DXP pathway; isopentenyl diphosphate from 1-deoxy-D-xylulose 5-phosphate: step 3/6. Catalyzes the phosphorylation of the position 2 hydroxy group of 4-diphosphocytidyl-2C-methyl-D-erythritol. This chain is 4-diphosphocytidyl-2-C-methyl-D-erythritol kinase, found in Rhodopseudomonas palustris (strain HaA2).